The primary structure comprises 192 residues: Dihydrofolate reductase (192 aa).

The DHFR domain occupies 5–191 (NVAIIVAALK…FTYNYTLWTR (187 aa)). NADP(+) is bound by residues Ala11 and 18–24 (GIGYKGK). 32 to 37 (EIRYFK) contributes to the substrate binding site. 56 to 58 (RKT) is an NADP(+) binding site. Arg72 serves as a coordination point for substrate. Residue 78–80 (SRS) participates in NADP(+) binding. Positions 112 and 118 each coordinate substrate. 113–120 (GGAEIYNE) lines the NADP(+) pocket.

It belongs to the dihydrofolate reductase family.

The enzyme catalyses (6S)-5,6,7,8-tetrahydrofolate + NADP(+) = 7,8-dihydrofolate + NADPH + H(+). It participates in cofactor biosynthesis; tetrahydrofolate biosynthesis; 5,6,7,8-tetrahydrofolate from 7,8-dihydrofolate: step 1/1. In terms of biological role, key enzyme in folate metabolism. Catalyzes an essential reaction for de novo glycine and purine synthesis, and for DNA precursor synthesis. The chain is Dihydrofolate reductase (DFR1) from Candida albicans (Yeast).